A 305-amino-acid polypeptide reads, in one-letter code: Tyrosine recombinase XerC (305 aa).

Positions 4–95 constitute a Core-binding (CB) domain; the sequence is TQIQELIIKW…AIKNFYKFLE (92 aa). Residues 116-298 form the Tyr recombinase domain; that stretch reads LLPKALSEEE…SIKHLETAYV (183 aa). Active-site residues include arginine 159, lysine 182, histidine 250, arginine 253, and histidine 276. Tyrosine 285 serves as the catalytic O-(3'-phospho-DNA)-tyrosine intermediate.

This sequence belongs to the 'phage' integrase family. XerC subfamily. In terms of assembly, forms a cyclic heterotetrameric complex composed of two molecules of XerC and two molecules of XerD.

The protein resides in the cytoplasm. In terms of biological role, site-specific tyrosine recombinase, which acts by catalyzing the cutting and rejoining of the recombining DNA molecules. The XerC-XerD complex is essential to convert dimers of the bacterial chromosome into monomers to permit their segregation at cell division. It also contributes to the segregational stability of plasmids. This Rickettsia bellii (strain OSU 85-389) protein is Tyrosine recombinase XerC.